Reading from the N-terminus, the 447-residue chain is Adenylosuccinate synthetase (447 aa).

Residues 12–18 (GDEGKGK) and 40–42 (GHT) each bind GTP. The active-site Proton acceptor is aspartate 13. Mg(2+) contacts are provided by aspartate 13 and glycine 40. Residues 13 to 16 (DEGK), 38 to 41 (NAGH), threonine 128, arginine 142, glutamine 223, threonine 238, and arginine 302 each bind IMP. Histidine 41 functions as the Proton donor in the catalytic mechanism. Substrate is bound at residue 298-304 (TTTGRKR). GTP is bound by residues arginine 304, 330–332 (KLD), and 412–414 (SLG).

The protein belongs to the adenylosuccinate synthetase family. In terms of assembly, homodimer. Requires Mg(2+) as cofactor.

Its subcellular location is the cytoplasm. It carries out the reaction IMP + L-aspartate + GTP = N(6)-(1,2-dicarboxyethyl)-AMP + GDP + phosphate + 2 H(+). It functions in the pathway purine metabolism; AMP biosynthesis via de novo pathway; AMP from IMP: step 1/2. In terms of biological role, plays an important role in the de novo pathway of purine nucleotide biosynthesis. Catalyzes the first committed step in the biosynthesis of AMP from IMP. This is Adenylosuccinate synthetase from Trichormus variabilis (strain ATCC 29413 / PCC 7937) (Anabaena variabilis).